The sequence spans 275 residues: NH(3)-dependent NAD(+) synthetase (275 aa).

An ATP-binding site is contributed by 46–53 (GISGGQDS). Aspartate 52 is a binding site for Mg(2+). Position 140 (arginine 140) interacts with deamido-NAD(+). Threonine 160 serves as a coordination point for ATP. Glutamate 165 is a binding site for Mg(2+). Lysine 173 and aspartate 180 together coordinate deamido-NAD(+). Residues lysine 189 and threonine 211 each coordinate ATP. Position 260–261 (260–261 (HK)) interacts with deamido-NAD(+).

This sequence belongs to the NAD synthetase family. Homodimer.

The enzyme catalyses deamido-NAD(+) + NH4(+) + ATP = AMP + diphosphate + NAD(+) + H(+). Its pathway is cofactor biosynthesis; NAD(+) biosynthesis; NAD(+) from deamido-NAD(+) (ammonia route): step 1/1. Catalyzes the ATP-dependent amidation of deamido-NAD to form NAD. Uses ammonia as a nitrogen source. This is NH(3)-dependent NAD(+) synthetase from Cronobacter sakazakii (strain ATCC BAA-894) (Enterobacter sakazakii).